The following is a 371-amino-acid chain: Dual-specificity RNA methyltransferase RlmN (371 aa).

Glutamate 99 functions as the Proton acceptor in the catalytic mechanism. The Radical SAM core domain occupies 106-333 (DDNRATLCIS…AIRRASKGQD (228 aa)). A disulfide bridge links cysteine 113 with cysteine 338. [4Fe-4S] cluster contacts are provided by cysteine 120, cysteine 124, and cysteine 127. Residues 165–166 (GE), serine 197, 219–221 (SLN), and asparagine 295 contribute to the S-adenosyl-L-methionine site. Catalysis depends on cysteine 338, which acts as the S-methylcysteine intermediate. Residues 345–371 (LTVSPPAQESERNSARPDRSQGKGKHL) form a disordered region. The segment covering 353–365 (ESERNSARPDRSQ) has biased composition (basic and acidic residues).

Belongs to the radical SAM superfamily. RlmN family. Requires [4Fe-4S] cluster as cofactor.

It localises to the cytoplasm. The enzyme catalyses adenosine(2503) in 23S rRNA + 2 reduced [2Fe-2S]-[ferredoxin] + 2 S-adenosyl-L-methionine = 2-methyladenosine(2503) in 23S rRNA + 5'-deoxyadenosine + L-methionine + 2 oxidized [2Fe-2S]-[ferredoxin] + S-adenosyl-L-homocysteine. The catalysed reaction is adenosine(37) in tRNA + 2 reduced [2Fe-2S]-[ferredoxin] + 2 S-adenosyl-L-methionine = 2-methyladenosine(37) in tRNA + 5'-deoxyadenosine + L-methionine + 2 oxidized [2Fe-2S]-[ferredoxin] + S-adenosyl-L-homocysteine. Functionally, specifically methylates position 2 of adenine 2503 in 23S rRNA and position 2 of adenine 37 in tRNAs. m2A2503 modification seems to play a crucial role in the proofreading step occurring at the peptidyl transferase center and thus would serve to optimize ribosomal fidelity. The sequence is that of Dual-specificity RNA methyltransferase RlmN from Syntrophotalea carbinolica (strain DSM 2380 / NBRC 103641 / GraBd1) (Pelobacter carbinolicus).